A 363-amino-acid polypeptide reads, in one-letter code: GDSL esterase/lipase At1g29670 (363 aa).

An N-terminal signal peptide occupies residues 1–24 (MESYLTKWCVVLVLLCFGFSVVKA). S39 (nucleophile) is an active-site residue. Active-site residues include D327 and H330.

It belongs to the 'GDSL' lipolytic enzyme family.

The protein localises to the secreted. The sequence is that of GDSL esterase/lipase At1g29670 from Arabidopsis thaliana (Mouse-ear cress).